Here is a 376-residue protein sequence, read N- to C-terminus: Alcohol dehydrogenase 1 (376 aa).

At serine 2 the chain carries N-acetylserine. Residues cysteine 47, histidine 68, cysteine 98, cysteine 101, cysteine 104, cysteine 112, and cysteine 176 each contribute to the Zn(2+) site. Residues 201 to 206, aspartate 225, lysine 230, 294 to 296, and arginine 371 each bind NAD(+); these read GLGGVG and VGV.

This sequence belongs to the zinc-containing alcohol dehydrogenase family. Class-I subfamily. In terms of assembly, homodimer. The cofactor is Zn(2+).

It is found in the cytoplasm. The catalysed reaction is a primary alcohol + NAD(+) = an aldehyde + NADH + H(+). The enzyme catalyses a secondary alcohol + NAD(+) = a ketone + NADH + H(+). The polypeptide is Alcohol dehydrogenase 1 (ADH1) (Gallus gallus (Chicken)).